We begin with the raw amino-acid sequence, 664 residues long: DCC-interacting protein 13-beta (664 aa).

Positions 1–428 are required for RAB5A binding; sequence MPAVDKLLLE…NSEMENENDK (428 aa). The region spanning 3–268 is the BAR domain; it reads AVDKLLLEEA…ESVYTPDSDV (266 aa). Residues 277 to 375 form the PH domain; sequence LIQKAGYLNL…WICAINNISR (99 aa). One can recognise a PID domain in the interval 488 to 637; sequence SLLQQMFIVR…LMLSIPLTND (150 aa). Positions 643–664 are disordered; sequence LNDQPDDDDGNPNEHRGAESEA. The segment covering 654 to 664 has biased composition (basic and acidic residues); that stretch reads PNEHRGAESEA.

In terms of assembly, homodimer. Homotetramer. Binds RAB5A/Rab5 through an N-terminal domain. This interaction is essential for its recruitment to endosomal membranes as well as its role in cell proliferation. Binds subunits of the NuRD/MeCP1 complex. Interacts with FSHR; interaction is independent of follicle stimulating hormone stimulation. Interacts with APPL1; the interaction is decreased by adiponectin in a time-dependent manner. Forms a complex comprising APPL1, RUVBL2, CTNNB1, HDAC1 and HDAC2; interaction reduces interaction between CTNNB1, HDAC1, HDAC2 and RUVBL2 leading to the decrease of deacetylase activity of this complex; affects the recruitment of repressive complexes to the Wnt target genes. Interacts (via BAR domain) with TBC1D1; interaction is dependent of TBC1D1 phosphorylation at 'Ser-235'; interaction diminishes the phosphorylation of TBC1D1 at 'Thr-596', resulting in inhibition of SLC2A4 translocation and glucose uptake. Interacts with ANXA2; targets APPL2 to endosomes and acting in parallel to RAB5A. Interacts with RAB31 (in GTP-bound form); interaction contributes to or enhances recruitment of APPL2 to the phagosomes; interaction enhances Fc-gamma receptor-mediated phagocytosis through PI3K/Akt signaling in macrophages. Interacts with PIK3R1; forms a complex with PIK3R1 and APPL1. Interacts (via BAR domain) with ADIPOR1; hinders the accessibility of APPL1 to ADIPOR1; negatively regulates adiponectin signaling; ADIPOQ dissociates this interaction and facilitates the recruitment of APPL1 to ADIPOR1. Interacts (via BAR domain) with ADIPOR2; ADIPOQ dissociates this interaction. As to expression, high levels in brain, heart, kidney and skeletal muscle.

The protein localises to the early endosome membrane. Its subcellular location is the nucleus. It localises to the cell membrane. It is found in the endosome membrane. The protein resides in the cytoplasm. The protein localises to the cytoplasmic vesicle. Its subcellular location is the phagosome. It localises to the cell projection. It is found in the ruffle. The protein resides in the ruffle membrane. The protein localises to the phagosome membrane. In terms of biological role, multifunctional adapter protein that binds to various membrane receptors, nuclear factors and signaling proteins to regulate many processes, such as cell proliferation, immune response, endosomal trafficking and cell metabolism. Regulates signaling pathway leading to cell proliferation through interaction with RAB5A and subunits of the NuRD/MeCP1 complex. Plays a role in immune response by modulating phagocytosis, inflammatory and innate immune responses. In macrophages, enhances Fc-gamma receptor-mediated phagocytosis through interaction with RAB31 leading to activation of PI3K/Akt signaling. In response to LPS, modulates inflammatory responses by playing a key role on the regulation of TLR4 signaling and in the nuclear translocation of RELA/NF-kappa-B p65 and the secretion of pro- and anti-inflammatory cytokines. Also functions as a negative regulator of innate immune response via inhibition of AKT1 signaling pathway by forming a complex with APPL1 and PIK3R1. Plays a role in endosomal trafficking of TGFBR1 from the endosomes to the nucleus. Plays a role in cell metabolism by regulating adiponecting ans insulin signaling pathways and adaptative thermogenesis. In muscle, negatively regulates adiponectin-simulated glucose uptake and fatty acid oxidation by inhibiting adiponectin signaling pathway through APPL1 sequestration thereby antagonizing APPL1 action. In muscles, negatively regulates insulin-induced plasma membrane recruitment of GLUT4 and glucose uptake through interaction with TBC1D1. Plays a role in cold and diet-induced adaptive thermogenesis by activating ventromedial hypothalamus (VMH) neurons throught AMPK inhibition which enhances sympathetic outflow to subcutaneous white adipose tissue (sWAT), sWAT beiging and cold tolerance. Also plays a role in other signaling pathways namely Wnt/beta-catenin, HGF and glucocorticoid receptor signaling. Positive regulator of beta-catenin/TCF-dependent transcription through direct interaction with RUVBL2/reptin resulting in the relief of RUVBL2-mediated repression of beta-catenin/TCF target genes by modulating the interactions within the beta-catenin-reptin-HDAC complex. May affect adult neurogenesis in hippocampus and olfactory system via regulating the sensitivity of glucocorticoid receptor. Required for fibroblast migration through HGF cell signaling. The sequence is that of DCC-interacting protein 13-beta from Homo sapiens (Human).